Reading from the N-terminus, the 160-residue chain is Leucokinin (160 aa).

The signal sequence occupies residues 1–19 (MAKIVLCMVLLAFGRQVYG). The propeptide occupies 20 to 130 (ASLVPAPISE…RIKSQLQRDE (111 aa)). The residue at position 147 (G147) is a Glycine amide. Positions 151-160 (SPEPPILPDY) are excised as a propeptide.

It localises to the secreted. Acts through intracellular calcium in Malpighian tubule stellate cells to raise chloride conductance. The chain is Leucokinin (Lk) from Drosophila melanogaster (Fruit fly).